A 441-amino-acid chain; its full sequence is Peroxisome proliferator-activated receptor delta (441 aa).

The span at 1–22 shows a compositional bias: acidic residues; that stretch reads MEQPQEEAPEVREEEEKEEVAE. Residues 1-54 are disordered; the sequence is MEQPQEEAPEVREEEEKEEVAEAEGAPELNGGPQHALPSSSYTDLSRSSSPPSL. Over residues 37–54 the composition is skewed to low complexity; the sequence is LPSSSYTDLSRSSSPPSL. Positions 71–145 form a DNA-binding region, nuclear receptor; that stretch reads NMECRVCGDK…LGMSHNAIRF (75 aa). 2 consecutive NR C4-type zinc fingers follow at residues 74 to 94 and 111 to 133; these read CRVCGDKASGFHYGVHACEGC and CERSCKIQKKNRNKCQYCRFQKC. The region spanning 211 to 439 is the NR LBD domain; it reads FVIHDIETLW…HPLLQEIYKD (229 aa).

It belongs to the nuclear hormone receptor family. NR1 subfamily. In terms of assembly, heterodimer with the retinoid X receptor. Interacts (via domain NR LBD) with CRY1 and CRY2 in a ligand-dependent manner. Post-translationally, 'Lys-48'-linked polyubiquitinated; leading to proteasomal degradation. Deubiquitinated and stabilized by OTUD3. As to expression, ubiquitous with maximal levels in placenta and skeletal muscle.

Its subcellular location is the nucleus. Functionally, ligand-activated transcription factor key mediator of energy metabolism in adipose tissues. Receptor that binds peroxisome proliferators such as hypolipidemic drugs and fatty acids. Has a preference for poly-unsaturated fatty acids, such as gamma-linoleic acid and eicosapentanoic acid. Once activated by a ligand, the receptor binds to promoter elements of target genes. Regulates the peroxisomal beta-oxidation pathway of fatty acids. Functions as transcription activator for the acyl-CoA oxidase gene. Decreases expression of NPC1L1 once activated by a ligand. This is Peroxisome proliferator-activated receptor delta from Homo sapiens (Human).